Consider the following 149-residue polypeptide: Large ribosomal subunit protein uL13 (149 aa).

This sequence belongs to the universal ribosomal protein uL13 family. In terms of assembly, part of the 50S ribosomal subunit.

This protein is one of the early assembly proteins of the 50S ribosomal subunit, although it is not seen to bind rRNA by itself. It is important during the early stages of 50S assembly. The sequence is that of Large ribosomal subunit protein uL13 from Chlorobium phaeovibrioides (strain DSM 265 / 1930) (Prosthecochloris vibrioformis (strain DSM 265)).